A 318-amino-acid polypeptide reads, in one-letter code: Homoserine kinase (318 aa).

97–107 (PIGSGLGSSAC) provides a ligand contact to ATP.

Belongs to the GHMP kinase family. Homoserine kinase subfamily.

It localises to the cytoplasm. The catalysed reaction is L-homoserine + ATP = O-phospho-L-homoserine + ADP + H(+). It functions in the pathway amino-acid biosynthesis; L-threonine biosynthesis; L-threonine from L-aspartate: step 4/5. Functionally, catalyzes the ATP-dependent phosphorylation of L-homoserine to L-homoserine phosphate. The polypeptide is Homoserine kinase (Aliivibrio fischeri (strain ATCC 700601 / ES114) (Vibrio fischeri)).